The following is a 417-amino-acid chain: MASYLYGVLFAVGLCAPIYCVSPANAPSAYPRPSSTKSTPASQVYSLNTDFAFRLYRRLVLETPSQNIFFSPVSVSTSLAMLSLGAHSVTKTQILQGLGFNLTHTPESAIHQGFQHLVHSLTVPSKDLTLKMGSALFVKKELQLQANFLGNVKRLYEAEVFSTDFSNPSIAQARINSHVKKKTQGKVVDIIQGLDLLTAMVLVNHIFFKAKWEKPFHPEYTRKNFPFLVGEQVTVHVPMMHQKEQFAFGVDTELNCFVLQMDYKGDAVAFFVLPSKGKMRQLEQALSARTLRKWSHSLQKRWIEVFIPRFSISASYNLETILPKMGIQNVFDKNADFSGIAKRDSLQVSKATHKAVLDVSEEGTEATAATTTKFIVRSKDGPSYFTVSFNRTFLMMITNKATDGILFLGKVENPTKS.

A signal peptide spans 1 to 23 (MASYLYGVLFAVGLCAPIYCVSP). Asparagine 101 and asparagine 390 each carry an N-linked (GlcNAc...) asparagine glycan.

The protein belongs to the serpin family. Highly expressed in normal germinal center (GC) B-cells and GC B-cell-derived malignancies.

The protein localises to the secreted. The protein resides in the cytoplasm. It localises to the membrane. Protease inhibitor that inhibits trypsin and trypsin-like serine proteases (in vitro). Inhibits plasmin and thrombin with lower efficiency (in vitro). This Homo sapiens (Human) protein is Serpin A9 (SERPINA9).